A 464-amino-acid polypeptide reads, in one-letter code: NADH dehydrogenase [ubiquinone] flavoprotein 1, mitochondrial (464 aa).

A mitochondrion-targeting transit peptide spans 1-20; it reads MLAARHFLGGLVPVRVSVRF. K81 carries the post-translational modification N6-acetyllysine; alternate. K81 carries the N6-succinyllysine; alternate modification. Residue 87–96 participates in NADH binding; sequence GRGGAGFPTG. An N6-acetyllysine modification is found at K104. 199–247 serves as a coordination point for FMN; it reads RGAGAYICGEETALIESIEGKQGKPRLKPPFPADVGVFGCPTTVANVET. At R257 the chain carries Omega-N-methylarginine. K375 carries the post-translational modification N6-acetyllysine. [4Fe-4S] cluster contacts are provided by C379, C382, C385, and C425.

This sequence belongs to the complex I 51 kDa subunit family. Core subunit of respiratory chain NADH dehydrogenase (Complex I) which is composed of 45 different subunits. This is a component of the flavoprotein-sulfur (FP) fragment of the enzyme. Interacts with RAB5IF. It depends on FMN as a cofactor. [4Fe-4S] cluster serves as cofactor.

The protein resides in the mitochondrion inner membrane. The enzyme catalyses a ubiquinone + NADH + 5 H(+)(in) = a ubiquinol + NAD(+) + 4 H(+)(out). Core subunit of the mitochondrial membrane respiratory chain NADH dehydrogenase (Complex I) which catalyzes electron transfer from NADH through the respiratory chain, using ubiquinone as an electron acceptor. Part of the peripheral arm of the enzyme, where the electrons from NADH are accepted by flavin mononucleotide (FMN) and then passed along a chain of iron-sulfur clusters by electron tunnelling to the final acceptor ubiquinone. Contains FMN, which is the initial electron acceptor as well as one iron-sulfur cluster. This Mus musculus (Mouse) protein is NADH dehydrogenase [ubiquinone] flavoprotein 1, mitochondrial.